The chain runs to 408 residues: Leucine aminopeptidase 1 (408 aa).

Residues 1 to 16 form the signal peptide; that stretch reads MKVSSAIALLLPVVAA. Positions 17–89 are excised as a propeptide; the sequence is RFVDSAFEQD…SAQSATTGPA (73 aa). 3 N-linked (GlcNAc...) asparagine glycosylation sites follow: asparagine 95, asparagine 108, and asparagine 182. Residues histidine 190, aspartate 209, glutamate 248, and aspartate 275 each coordinate Zn(2+). Cysteine 324 and cysteine 328 are disulfide-bonded. Position 357 (histidine 357) interacts with Zn(2+).

This sequence belongs to the peptidase M28 family. M28E subfamily. Monomer. Requires Zn(2+) as cofactor.

The protein localises to the secreted. Functionally, extracellular aminopeptidase that allows assimilation of proteinaceous substrates. This is Leucine aminopeptidase 1 (LAP1) from Grosmannia clavigera (strain kw1407 / UAMH 11150) (Blue stain fungus).